The primary structure comprises 257 residues: Indole-3-glycerol phosphate synthase (257 aa).

The protein belongs to the TrpC family.

It carries out the reaction 1-(2-carboxyphenylamino)-1-deoxy-D-ribulose 5-phosphate + H(+) = (1S,2R)-1-C-(indol-3-yl)glycerol 3-phosphate + CO2 + H2O. It functions in the pathway amino-acid biosynthesis; L-tryptophan biosynthesis; L-tryptophan from chorismate: step 4/5. This is Indole-3-glycerol phosphate synthase from Phenylobacterium zucineum (strain HLK1).